The chain runs to 198 residues: Penicillin-binding protein activator LpoB (198 aa).

A signal peptide spans 1-20 (MSWIRIRRSGVLLLALVLSG). C21 carries N-palmitoyl cysteine lipidation. C21 carries S-diacylglycerol cysteine lipidation. The disordered stretch occupies residues 28–62 (PQPAAPVEPVTPPVNVPQPPKAEPGQNVPPPPKMQ). Positions 30 to 61 (PAAPVEPVTPPVNVPQPPKAEPGQNVPPPPKM) are enriched in pro residues.

This sequence belongs to the LpoB family. As to quaternary structure, interacts with PBP1b.

It is found in the cell outer membrane. In terms of biological role, regulator of peptidoglycan synthesis that is essential for the function of penicillin-binding protein 1B (PBP1b). The protein is Penicillin-binding protein activator LpoB of Erwinia amylovora (strain CFBP1430).